Consider the following 130-residue polypeptide: Small ribosomal subunit protein uS11 (130 aa).

This sequence belongs to the universal ribosomal protein uS11 family. In terms of assembly, part of the 30S ribosomal subunit. Interacts with proteins S7 and S18. Binds to IF-3.

Functionally, located on the platform of the 30S subunit, it bridges several disparate RNA helices of the 16S rRNA. Forms part of the Shine-Dalgarno cleft in the 70S ribosome. In Xylella fastidiosa (strain M12), this protein is Small ribosomal subunit protein uS11.